We begin with the raw amino-acid sequence, 127 residues long: Aspartate 1-decarboxylase (127 aa).

Catalysis depends on Ser-25, which acts as the Schiff-base intermediate with substrate; via pyruvic acid. Ser-25 is subject to Pyruvic acid (Ser). Thr-57 contributes to the substrate binding site. The active-site Proton donor is the Tyr-58. Substrate is bound at residue 73-75 (GAA).

This sequence belongs to the PanD family. In terms of assembly, heterooctamer of four alpha and four beta subunits. Pyruvate serves as cofactor. In terms of processing, is synthesized initially as an inactive proenzyme, which is activated by self-cleavage at a specific serine bond to produce a beta-subunit with a hydroxyl group at its C-terminus and an alpha-subunit with a pyruvoyl group at its N-terminus.

The protein resides in the cytoplasm. It carries out the reaction L-aspartate + H(+) = beta-alanine + CO2. The protein operates within cofactor biosynthesis; (R)-pantothenate biosynthesis; beta-alanine from L-aspartate: step 1/1. Its function is as follows. Catalyzes the pyruvoyl-dependent decarboxylation of aspartate to produce beta-alanine. This chain is Aspartate 1-decarboxylase, found in Anoxybacillus flavithermus (strain DSM 21510 / WK1).